The primary structure comprises 207 residues: Ribosomal RNA small subunit methyltransferase G (207 aa).

Residues Gly73, Leu78, 124-125 (VE), and Arg139 each bind S-adenosyl-L-methionine.

Belongs to the methyltransferase superfamily. RNA methyltransferase RsmG family.

The protein resides in the cytoplasm. It catalyses the reaction guanosine(527) in 16S rRNA + S-adenosyl-L-methionine = N(7)-methylguanosine(527) in 16S rRNA + S-adenosyl-L-homocysteine. Functionally, specifically methylates the N7 position of guanine in position 527 of 16S rRNA. The protein is Ribosomal RNA small subunit methyltransferase G of Salmonella agona (strain SL483).